We begin with the raw amino-acid sequence, 318 residues long: Pyrimidine-specific ribonucleoside hydrolase RihA (318 aa).

Residue His240 is part of the active site.

It belongs to the IUNH family. RihA subfamily.

Hydrolyzes cytidine or uridine to ribose and cytosine or uracil, respectively. The sequence is that of Pyrimidine-specific ribonucleoside hydrolase RihA from Shewanella sp. (strain MR-4).